A 285-amino-acid polypeptide reads, in one-letter code: GTP-binding protein 8 (285 aa).

Residues Arg-110 to Ser-283 form the EngB-type G domain. GTP is bound by residues Gly-118–Ser-125, Gly-147–Lys-151, Asp-165–Gly-168, Thr-227–Asp-230, and Ile-262–Ala-264. Mg(2+) is bound by residues Ser-125 and Thr-149.

It belongs to the TRAFAC class TrmE-Era-EngA-EngB-Septin-like GTPase superfamily. EngB GTPase family. It depends on Mg(2+) as a cofactor.

This Rattus norvegicus (Rat) protein is GTP-binding protein 8 (Gtpbp8).